The chain runs to 689 residues: Glycine--tRNA ligase beta subunit (689 aa).

This sequence belongs to the class-II aminoacyl-tRNA synthetase family. In terms of assembly, tetramer of two alpha and two beta subunits.

The protein resides in the cytoplasm. It carries out the reaction tRNA(Gly) + glycine + ATP = glycyl-tRNA(Gly) + AMP + diphosphate. The polypeptide is Glycine--tRNA ligase beta subunit (Citrobacter koseri (strain ATCC BAA-895 / CDC 4225-83 / SGSC4696)).